Here is a 422-residue protein sequence, read N- to C-terminus: MDFLEIVGQVPLKGEVEISGAKNSALPILAATLLSHQEVKIKSLPQVVDIKAMALLLQNLGAELEWLNPHTLQLSAKSLHHTEATYDLVRKMRASILVLGPLLARFKECLVSLPGGCAIGARPVDLHLKAMQQLGAEIKIEQGYIHAKAPKGLKGNDILFDKISVTGTENALMAASLAKGITRIINAAKEPEIAQLCAFLQSGGVEIEGVDSSELKIRGVESDALNLKDIQIIPDRIEAGTCLCVGAITNSQLKINHIIPNHIQAITDKLIEIGFPLDIQENSIEIYPAKKRQAFEITTKEYPGFPTDMQAQFMALATQCLGTSIIEETLFENRFMHASELQRLGANISLKTNVATISGSTELTGSDVMATDLRASSALVLAALVAKGVSRVHRIYHLDRGYERLEDKVNALGAKVLRLKEK.

22 to 23 (KN) is a phosphoenolpyruvate binding site. Arg-93 is a binding site for UDP-N-acetyl-alpha-D-glucosamine. Cys-117 acts as the Proton donor in catalysis. A 2-(S-cysteinyl)pyruvic acid O-phosphothioketal modification is found at Cys-117. UDP-N-acetyl-alpha-D-glucosamine contacts are provided by residues 122–126 (RPVDL), Asp-308, and Leu-330.

The protein belongs to the EPSP synthase family. MurA subfamily.

It is found in the cytoplasm. The catalysed reaction is phosphoenolpyruvate + UDP-N-acetyl-alpha-D-glucosamine = UDP-N-acetyl-3-O-(1-carboxyvinyl)-alpha-D-glucosamine + phosphate. It participates in cell wall biogenesis; peptidoglycan biosynthesis. Its function is as follows. Cell wall formation. Adds enolpyruvyl to UDP-N-acetylglucosamine. The polypeptide is UDP-N-acetylglucosamine 1-carboxyvinyltransferase (Helicobacter pylori (strain J99 / ATCC 700824) (Campylobacter pylori J99)).